A 395-amino-acid chain; its full sequence is NAD(P)H-quinone oxidoreductase subunit H, chloroplastic (395 aa).

The protein belongs to the complex I 49 kDa subunit family. NDH is composed of at least 16 different subunits, 5 of which are encoded in the nucleus.

The protein localises to the plastid. The protein resides in the chloroplast thylakoid membrane. The catalysed reaction is a plastoquinone + NADH + (n+1) H(+)(in) = a plastoquinol + NAD(+) + n H(+)(out). It carries out the reaction a plastoquinone + NADPH + (n+1) H(+)(in) = a plastoquinol + NADP(+) + n H(+)(out). In terms of biological role, NDH shuttles electrons from NAD(P)H:plastoquinone, via FMN and iron-sulfur (Fe-S) centers, to quinones in the photosynthetic chain and possibly in a chloroplast respiratory chain. The immediate electron acceptor for the enzyme in this species is believed to be plastoquinone. Couples the redox reaction to proton translocation, and thus conserves the redox energy in a proton gradient. In Staurastrum punctulatum (Green alga), this protein is NAD(P)H-quinone oxidoreductase subunit H, chloroplastic.